The sequence spans 145 residues: Regulator of sigma D (145 aa).

This sequence belongs to the Rsd/AlgQ family. Interacts with RpoD.

The protein resides in the cytoplasm. Its function is as follows. Binds RpoD and negatively regulates RpoD-mediated transcription activation by preventing the interaction between the primary sigma factor RpoD with the catalytic core of the RNA polymerase and with promoter DNA. May be involved in replacement of the RNA polymerase sigma subunit from RpoD to RpoS during the transition from exponential growth to the stationary phase. In Sodalis glossinidius (strain morsitans), this protein is Regulator of sigma D.